Reading from the N-terminus, the 455-residue chain is Ammonium transporter Rh type B (455 aa).

Residues 1–13 (MAWSPRHSAGRRL) lie on the Cytoplasmic side of the membrane. Residues 14–34 (QLPLLCLLLQGATAILFAVFV) traverse the membrane as a helical segment. Residues 35–61 (RYNRETDAALWHWGNHSNADNEFYFRY) lie on the Extracellular side of the membrane. The N-linked (GlcNAc...) asparagine glycan is linked to Asn-49. A helical transmembrane segment spans residues 62–82 (PSFQDVHAMIFVGFGFLMVFL). The Cytoplasmic segment spans residues 83–86 (QRYG). A helical membrane pass occupies residues 87-107 (FGSVGFTFLLAAFALQWSTLI). The Extracellular portion of the chain corresponds to 108–124 (QGFFHSFRGGYILVGME). The helical transmembrane segment at 125–145 (SMINADFCAGAVLISFGAVLG) threads the bilayer. Residues 146 to 151 (KTGPVQ) lie on the Cytoplasmic side of the membrane. Residues 152 to 172 (LLLMALLEVVLFGLNEFVLLS) traverse the membrane as a helical segment. The Extracellular portion of the chain corresponds to 173 to 179 (LLEVKDA). The helical transmembrane segment at 180-200 (GGSMTIHTFGAYFGLILSRVL) threads the bilayer. At 201–219 (YRPQLEKSKHRQGSVYHSD) the chain is on the cytoplasmic side. Residues 220-240 (LFAMIGTIFLWIFWPSFNSAP) traverse the membrane as a helical segment. Residues 241–253 (TALGDGQHRTALN) lie on the Extracellular side of the membrane. The helical transmembrane segment at 254–274 (TYYSLTASTLSTFALSALVGG) threads the bilayer. At 275–277 (DGR) the chain is on the cytoplasmic side. Residues 278–298 (LDMVHVQNAALAGGVVVGTSA) traverse the membrane as a helical segment. A topological domain (extracellular) is located at residue Glu-299. Residues 300-320 (MMLTPFGALAAGFLAGAISTL) traverse the membrane as a helical segment. The Cytoplasmic portion of the chain corresponds to 321 to 343 (GYKFVTPILESKLKVQDTCGVHN). The helical transmembrane segment at 344–364 (LHGMPGVLGALLGGLVAGLAT) threads the bilayer. Over 365–393 (REAYGDGLESVFPLIAEGQRSATSQAMHQ) the chain is Extracellular. The helical transmembrane segment at 394-414 (LFGLFVTLTFASVGGGLGGLL) threads the bilayer. Residues 415–455 (LRLPILDSPPDSQCYEDQIYWEVPGEHEHLAQGSEETETQA) lie on the Cytoplasmic side of the membrane. The interaction with ANK3 stretch occupies residues 416–424 (RLPILDSPP). The Basolateral sorting signal motif lies at 429–432 (YEDQ).

This sequence belongs to the ammonium transporter (TC 2.A.49) family. Rh subfamily. As to quaternary structure, interacts (via C-terminus) with ANK2 and ANK3; required for targeting to the basolateral membrane. Post-translationally, N-glycosylated.

The protein resides in the cell membrane. Its subcellular location is the basolateral cell membrane. The enzyme catalyses NH4(+)(in) = NH4(+)(out). It catalyses the reaction methylamine(out) = methylamine(in). It carries out the reaction CO2(out) = CO2(in). Ammonium transporter involved in the maintenance of acid-base homeostasis. Transports ammonium and its related derivative methylammonium across the basolateral plasma membrane of epithelial cells likely contributing to renal transepithelial ammonia transport and ammonia metabolism. May transport either NH4(+) or NH3 ammonia species predominantly mediating an electrogenic NH4(+) transport. May act as a CO2 channel providing for renal acid secretion. This is Ammonium transporter Rh type B (RHBG) from Bos taurus (Bovine).